The primary structure comprises 229 residues: Peptidase E (229 aa).

Catalysis depends on charge relay system residues S120, D135, and H157.

This sequence belongs to the peptidase S51 family.

The protein resides in the cytoplasm. It carries out the reaction Dipeptidase E catalyzes the hydrolysis of dipeptides Asp-|-Xaa. It does not act on peptides with N-terminal Glu, Asn or Gln, nor does it cleave isoaspartyl peptides.. Hydrolyzes dipeptides containing N-terminal aspartate residues. May play a role in allowing the cell to use peptide aspartate to spare carbon otherwise required for the synthesis of the aspartate family of amino acids. This chain is Peptidase E, found in Salmonella arizonae (strain ATCC BAA-731 / CDC346-86 / RSK2980).